Reading from the N-terminus, the 1175-residue chain is Pyruvate carboxylase (1175 aa).

A Biotin carboxylation domain is found at 22–474 (NANKILVANR…WTTFIDDTPS (453 aa)). Residues K140, E224, and H259 each contribute to the ATP site. The region spanning 144–341 (RNLAGKCNVP…IVAAQIQIAA (198 aa)) is the ATP-grasp domain. R316 is a catalytic residue. A Pyruvate carboxyltransferase domain is found at 561-828 (CLIMDTTWRD…NTGITEQNAR (268 aa)). Substrate contacts are provided by residues 569–573 (RDAHQ) and R642. D570 serves as a coordination point for a divalent metal cation. A divalent metal cation contacts are provided by K738, H768, and H770. Position 738 is an N6-carboxylysine (K738). T902 lines the substrate pocket. A Biotinyl-binding domain is found at 1099 to 1174 (KADAHNPNEV…DAGDLICKIT (76 aa)). Position 1140 is an N6-biotinyllysine (K1140).

It depends on biotin as a cofactor. Requires Zn(2+) as cofactor.

It is found in the cytoplasm. The enzyme catalyses hydrogencarbonate + pyruvate + ATP = oxaloacetate + ADP + phosphate + H(+). Its pathway is carbohydrate biosynthesis; gluconeogenesis. Pyruvate carboxylase catalyzes a 2-step reaction, involving the ATP-dependent carboxylation of the covalently attached biotin in the first step and the transfer of the carboxyl group to pyruvate in the second. The sequence is that of Pyruvate carboxylase (PYC) from Pichia angusta (Yeast).